A 263-amino-acid polypeptide reads, in one-letter code: Putative TATA-binding protein pB263R (263 aa).

This sequence belongs to the asfivirus B263R family.

Putative TATA-binding protein. The polypeptide is Putative TATA-binding protein pB263R (African swine fever virus (isolate Warthog/Namibia/Wart80/1980) (ASFV)).